The primary structure comprises 125 residues: Small ribosomal subunit protein uS11m (125 aa).

The protein belongs to the universal ribosomal protein uS11 family.

Its subcellular location is the mitochondrion. This is Small ribosomal subunit protein uS11m (RPS11) from Marchantia polymorpha (Common liverwort).